Reading from the N-terminus, the 1500-residue chain is Copper-transporting ATPase 1 (1500 aa).

Topologically, residues 1-653 (MDPSMGVNSV…KREIRQWRRS (653 aa)) are cytoplasmic. HMA domains are found at residues 8-74 (NSVT…FDAV) and 85-151 (TDTL…LDTG). Cu(+)-binding residues include Thr18, Cys19, and Cys22. Thr152 bears the Phosphothreonine mark. The region spanning 171–237 (VVLKMKVEGM…QIEAMGFPAF (67 aa)) is the HMA 3 domain. Residues Cys182 and Cys185 each coordinate Cu(+). A Phosphoserine modification is found at Ser270. Residues 277–343 (STATFIIDGM…AIEAVSPGLY (67 aa)) form the HMA 4 domain. Residues Cys288 and Cys291 each coordinate Cu(+). A Phosphothreonine modification is found at Thr327. Phosphoserine occurs at positions 339, 353, 357, and 362. HMA domains are found at residues 377-443 (QETV…FDAT), 488-554 (SKCY…FGAT), and 564-630 (GVLE…FEAS). The Cu(+) site is built by Cys388, Cys391, Cys499, Cys502, Cys575, and Cys578. A helical membrane pass occupies residues 654–675 (FLVSLFFCIPVMGLMIYMMVMD). Residues 676 to 714 (HHFATLHHNQNMSKEEMINLHSSMFLERQILPGLSVMNL) lie on the Extracellular side of the membrane. Residue Asn686 is glycosylated (N-linked (GlcNAc...) asparagine). A helical membrane pass occupies residues 715 to 734 (LSFLLCVPVQFFGGWYFYIQ). The Cytoplasmic portion of the chain corresponds to 735–741 (AYKALKH). The helical transmembrane segment at 742–762 (KTANMDVLIVLATTIAFAYSL) threads the bilayer. The Extracellular portion of the chain corresponds to 763–781 (IILLVAMYERAKVNPITFF). The helical transmembrane segment at 782–802 (DTPPMLFVFIALGRWLEHIAK) threads the bilayer. Topologically, residues 803–936 (GKTSEALAKL…KAPIQQFADK (134 aa)) are cytoplasmic. A helical membrane pass occupies residues 937–959 (LSGYFVPFIVFVSIATLLVWIVI). At 960-989 (GFLNFEIVETYFPGYNRSISRTETIIRFAF) the chain is on the extracellular side. N-linked (GlcNAc...) asparagine glycosylation occurs at Asn975. A helical transmembrane segment spans residues 990 to 1011 (QASITVLCIACPCSLGLATPTA). Topologically, residues 1012-1356 (VMVGTGVGAQ…LSRKTVKRIR (345 aa)) are cytoplasmic. Catalysis depends on Asp1044, which acts as the 4-aspartylphosphate intermediate. Glu1081 serves as a coordination point for ATP. The residue at position 1212 (Thr1212) is a Phosphothreonine. Residues Asp1301 and Asp1305 each coordinate Mg(2+). A helical transmembrane segment spans residues 1357–1374 (INFVFALIYNLVGIPIAA). Over 1375–1385 (GVFMPIGLVLQ) the chain is Extracellular. A helical transmembrane segment spans residues 1386 to 1405 (PWMGSAAMAASSVSVVLSSL). The Cytoplasmic portion of the chain corresponds to 1406–1500 (FLKLYRKPTY…DFREDDDTAL (95 aa)). 5 positions are modified to phosphoserine: Ser1430, Ser1432, Ser1460, Ser1463, and Ser1466. Residues 1467-1468 (LL) carry the Endocytosis signal motif. Ser1469, Ser1473, Ser1476, and Ser1486 each carry phosphoserine. Positions 1486-1500 (SLLVGDFREDDDTAL) are PDZD11-binding. The Endocytosis signal signature appears at 1487 to 1488 (LL).

It belongs to the cation transport ATPase (P-type) (TC 3.A.3) family. Type IB subfamily. In terms of assembly, monomer. Interacts with PDZD11. Interacts with ATOX1 and COMMD1. Interacts with TYRP1. Directly interacts with SOD3; this interaction is copper-dependent and is required for SOD3 activity. Widely expressed including in heart, brain, lung, muscle, kidney, pancreas, and to a lesser extent placenta. Expressed in fibroblasts, aortic smooth muscle cells, aortic endothelial cells and umbilical vein endothelial cells (at protein level). In terms of tissue distribution, expressed in cerebellum and brain cortex.

The protein resides in the golgi apparatus. Its subcellular location is the trans-Golgi network membrane. It localises to the cell membrane. The protein localises to the melanosome membrane. It is found in the early endosome membrane. The protein resides in the cell projection. Its subcellular location is the axon. It localises to the dendrite. The protein localises to the postsynaptic density. It is found in the cytoplasm. The protein resides in the cytosol. Its subcellular location is the endoplasmic reticulum. It carries out the reaction Cu(+)(in) + ATP + H2O = Cu(+)(out) + ADP + phosphate + H(+). Its function is as follows. ATP-driven copper (Cu(+)) ion pump that plays an important role in intracellular copper ion homeostasis. Within a catalytic cycle, acquires Cu(+) ion from donor protein on the cytoplasmic side of the membrane and delivers it to acceptor protein on the lumenal side. The transfer of Cu(+) ion across the membrane is coupled to ATP hydrolysis and is associated with a transient phosphorylation that shifts the pump conformation from inward-facing to outward-facing state. Under physiological conditions, at low cytosolic copper concentration, it is localized at the trans-Golgi network (TGN) where it transfers Cu(+) ions to cuproenzymes of the secretory pathway. Upon elevated cytosolic copper concentrations, it relocalizes to the plasma membrane where it is responsible for the export of excess Cu(+) ions. May play a dual role in neuron function and survival by regulating cooper efflux and neuronal transmission at the synapse as well as by supplying Cu(+) ions to enzymes such as PAM, TYR and SOD3. In the melanosomes of pigmented cells, provides copper cofactor to TYR to form an active TYR holoenzyme for melanin biosynthesis. This Homo sapiens (Human) protein is Copper-transporting ATPase 1.